A 334-amino-acid polypeptide reads, in one-letter code: D-alanine--D-alanine ligase (334 aa).

Residues 114-314 (KRIWRFEGLP…YEELCLRILA (201 aa)) form the ATP-grasp domain. Residue 140–195 (LEDLGSPMIVKPSREGSTIGLTKVTSPGQCEQAYRLASRYDPEVLCEQFIEGEETT) coordinates ATP. Residues aspartate 267, glutamate 281, and asparagine 283 each coordinate Mg(2+).

This sequence belongs to the D-alanine--D-alanine ligase family. It depends on Mg(2+) as a cofactor. Mn(2+) serves as cofactor.

It localises to the cytoplasm. It carries out the reaction 2 D-alanine + ATP = D-alanyl-D-alanine + ADP + phosphate + H(+). It functions in the pathway cell wall biogenesis; peptidoglycan biosynthesis. In terms of biological role, cell wall formation. This is D-alanine--D-alanine ligase from Paracidovorax citrulli (strain AAC00-1) (Acidovorax citrulli).